A 317-amino-acid chain; its full sequence is MAIDYDKHIPVLLNEAVTALNIKKDGIYIDGTFGRGGHSRLILSKLGNKGRLLAIDRDPAAIAAGRNIHDLRFTIVQRPFSTIADYIAELNLIGCIDGILLDLGISSPQLADPDRGFSFRHNGKLDMRMDTTCGISAREWLKQASVQEMTWVLQHFGEERFAKRISQAIFHQNRRRLITSTSELAKLITTIVPWSNKHKHPATRSFQAIRIYINNELKEIEQVLNSALNILAIGGKLVVISFHSLEDRLVKYFINKHSKLPLPPTGISLTEKQIADLYKNRHLTLKNLGKIRPSIQEIKVNPRARSALLRFAEKLDI.

Residues 36 to 38 (GGH), D56, F80, D102, and Q109 contribute to the S-adenosyl-L-methionine site.

It belongs to the methyltransferase superfamily. RsmH family.

It is found in the cytoplasm. It catalyses the reaction cytidine(1402) in 16S rRNA + S-adenosyl-L-methionine = N(4)-methylcytidine(1402) in 16S rRNA + S-adenosyl-L-homocysteine + H(+). Its function is as follows. Specifically methylates the N4 position of cytidine in position 1402 (C1402) of 16S rRNA. This is Ribosomal RNA small subunit methyltransferase H from Baumannia cicadellinicola subsp. Homalodisca coagulata.